A 201-amino-acid polypeptide reads, in one-letter code: Basic helix-loop-helix transcription factor scleraxis (201 aa).

2 disordered regions span residues 1-92 and 148-177; these read MSFA…NSVN and AFFH…QPKQ. Residues 59-69 show a composition bias toward gly residues; it reads RRAGGGGPGGR. Residues 70 to 88 show a composition bias toward basic and acidic residues; the sequence is PGREPRQRHTANARERDRT. Positions 75 to 127 constitute a bHLH domain; the sequence is RQRHTANARERDRTNSVNTAFTALRTLIPTEPADRKLSKIETLRLASSYISHL. Positions 157–167 are enriched in pro residues; that stretch reads SPPPPPPPPPA.

Efficient DNA binding requires dimerization with another bHLH protein. Dimerizes and binds the E-box consensus sequence with E12.

It localises to the nucleus. Functionally, plays an early essential role in mesoderm formation, as well as a later role in formation of somite-derived chondrogenic lineages. The polypeptide is Basic helix-loop-helix transcription factor scleraxis (SCX) (Homo sapiens (Human)).